Reading from the N-terminus, the 219-residue chain is Protein-methionine-sulfoxide reductase heme-binding subunit MsrQ (219 aa).

Helical transmembrane passes span 17 to 37 (AKPLIFMVCLLPFAWLFYAAW), 88 to 108 (LFAYFYVVLHLLSYSWFDMGF), 121 to 141 (PFILVGFSAFVLLTPLAATSF), 153 to 173 (WQLLHKLVYLIAGLGLLHFFW), and 184 to 204 (VFVYAAIVALLLGWRVWNHWA).

This sequence belongs to the MsrQ family. Heterodimer of a catalytic subunit (MsrP) and a heme-binding subunit (MsrQ). FMN serves as cofactor. It depends on heme b as a cofactor.

The protein resides in the cell inner membrane. Its function is as follows. Part of the MsrPQ system that repairs oxidized periplasmic proteins containing methionine sulfoxide residues (Met-O), using respiratory chain electrons. Thus protects these proteins from oxidative-stress damage caused by reactive species of oxygen and chlorine generated by the host defense mechanisms. MsrPQ is essential for the maintenance of envelope integrity under bleach stress, rescuing a wide series of structurally unrelated periplasmic proteins from methionine oxidation. MsrQ provides electrons for reduction to the reductase catalytic subunit MsrP, using the quinone pool of the respiratory chain. The protein is Protein-methionine-sulfoxide reductase heme-binding subunit MsrQ of Polaromonas naphthalenivorans (strain CJ2).